The chain runs to 659 residues: Threonine--tRNA ligase (659 aa).

The region spanning 1 to 60 is the TGS domain; the sequence is MTVYLPDGKPLELPEGATAKDVARALGEGWERRAVGAIVDGELYDLLKPLPQGAKVRLLT. 2 catalytic regions span residues 234 to 548 and 252 to 552; these read TAEE…EHFA and DHRR…GDFP. Residues C349, H400, and H529 each coordinate Zn(2+).

The protein belongs to the class-II aminoacyl-tRNA synthetase family. In terms of assembly, homodimer. Requires Zn(2+) as cofactor.

It localises to the cytoplasm. It carries out the reaction tRNA(Thr) + L-threonine + ATP = L-threonyl-tRNA(Thr) + AMP + diphosphate + H(+). Catalyzes the attachment of threonine to tRNA(Thr) in a two-step reaction: L-threonine is first activated by ATP to form Thr-AMP and then transferred to the acceptor end of tRNA(Thr). Also edits incorrectly charged L-seryl-tRNA(Thr). In Thermus thermophilus (strain ATCC 27634 / DSM 579 / HB8), this protein is Threonine--tRNA ligase.